Consider the following 389-residue polypeptide: MVSVSEIRKAQRAEGPATILAIGTANPANCVEQSTYPDFYFKITNSEHKTELKEKFQRMCDKSMIKRRYMYLTEEILKENPSVCEYMAPSLDARQDMVVVEVPRLGKEAAVKAIKEWGQPKSKITHLIVCTTSGVDMPGADYQLTKLLGLRPYVKRYMMYQQGCFAGGTVLRLAKDLAENNKGARVLVVCSEVTAVTFRGPSDTHLDSLVGQALFGDGAAALIVGSDPVPEIEKPIFEMVWTAQTIAPDSEGAIDGHLREAGLTFHLLKDVPGIVSKNIDKALVEAFQPLGISDYNSIFWIAHPGGPAILDQVEQKLALKPEKMRATREVLSEYGNMSSACVLFILDEMRKKSTQDGLKTTGEGLEWGVLFGFGPGLTIETVVLRSVAI.

Cys-164 is an active-site residue.

This sequence belongs to the thiolase-like superfamily. Chalcone/stilbene synthases family.

It carries out the reaction (E)-4-coumaroyl-CoA + 3 malonyl-CoA + 3 H(+) = 2',4,4',6'-tetrahydroxychalcone + 3 CO2 + 4 CoA. The protein operates within secondary metabolite biosynthesis; flavonoid biosynthesis. Functionally, the primary product of this enzyme is 4,2',4',6'-tetrahydroxychalcone (also termed naringenin-chalcone or chalcone) which can under specific conditions spontaneously isomerize into naringenin. The sequence is that of Chalcone synthase 4 (CHS4) from Medicago sativa (Alfalfa).